A 325-amino-acid chain; its full sequence is MSFDYTDPTFRNYPFPHYCDFDRHQHCDHDLRTNPPPTEPPSRKSKLMSTSENKGKQPLHPPPTEGFPKPPPPPSSTPTTPTPPDQTKAPEPIEKRIIHAFHAEPKTHTNGEAPPAFNPNNMNAVPLNLLNINLKYSPVTNSIANPKQTEAIGKAWVRILQIDPANVFLYAIDLARACADAGSSPEADIIGANEDLNPVVERNALAGVVRDFCPLRAFCAYYSRVVWNLMIKADQPPANWMKSGIDEGAKFAAFDFFHGVLSPASLYVPLERHPTAAERIANQAMFAVKIANAPGNGSELTMDHVAFTKGRITADSKPRPTPFNT.

Residues 30–89 (DLRTNPPPTEPPSRKSKLMSTSENKGKQPLHPPPTEGFPKPPPPPSSTPTTPTPPDQTKA) are disordered. Residues 59–84 (LHPPPTEGFPKPPPPPSSTPTTPTPP) show a composition bias toward pro residues.

It belongs to the potexviruses coat protein family.

It is found in the virion. In terms of biological role, required for genome encapsidation. Forms ribonucleoprotein complexes along with TGB1 helicase and viral RNA. The protein is Capsid protein of Citrus (ICRSV).